We begin with the raw amino-acid sequence, 124 residues long: Tax1-binding protein 3 (124 aa).

An N-acetylserine modification is found at Ser-2. A PDZ domain is found at 15-112; sequence RVEIHKLRQG…EVVRLLVTRQ (98 aa). Phosphoserine is present on Ser-61.

Interacts (via its PDZ domain) with GLS2. Interacts (via its PDZ domain) with RTKN (via the C-terminal region); this interaction facilitates Rho-mediated activation of the FOS serum response element (SRE). Interacts (via PDZ domain) with ARHGEF16. Interacts (via PDZ domain) with KCNJ4 (via C-terminus). Competes with LIN7A for KCNJ4 binding. Interacts (via its PDZ domain) with CTNNB1; this interaction inhibits the transcriptional activity of CTNNB1. Interacts with ADGRB2.

Its subcellular location is the cytoplasm. The protein resides in the nucleus. It localises to the cell membrane. Its function is as follows. May regulate a number of protein-protein interactions by competing for PDZ domain binding sites. Binds CTNNB1 and may thereby act as an inhibitor of the Wnt signaling pathway. Competes with LIN7A for KCNJ4 binding, and thereby promotes KCNJ4 internalization. May play a role in the Rho signaling pathway. In Mus musculus (Mouse), this protein is Tax1-binding protein 3.